We begin with the raw amino-acid sequence, 152 residues long: Interleukin-2 (152 aa).

The signal sequence occupies residues 1–20 (MYRMQLLSCIALTLALVANG). Threonine 23 carries O-linked (GalNAc...) threonine glycosylation. The cysteines at positions 78 and 126 are disulfide-linked.

The protein belongs to the IL-2 family.

The protein localises to the secreted. In terms of biological role, cytokine produced by activated CD4-positive helper T-cells and to a lesser extend activated CD8-positive T-cells and natural killer (NK) cells that plays pivotal roles in the immune response and tolerance. Binds to a receptor complex composed of either the high-affinity trimeric IL-2R (IL2RA/CD25, IL2RB/CD122 and IL2RG/CD132) or the low-affinity dimeric IL-2R (IL2RB and IL2RG). Interaction with the receptor leads to oligomerization and conformation changes in the IL-2R subunits resulting in downstream signaling starting with phosphorylation of JAK1 and JAK3. In turn, JAK1 and JAK3 phosphorylate the receptor to form a docking site leading to the phosphorylation of several substrates including STAT5. This process leads to activation of several pathways including STAT, phosphoinositide-3-kinase/PI3K and mitogen-activated protein kinase/MAPK pathways. Functions as a T-cell growth factor and can increase NK-cell cytolytic activity as well. Promotes strong proliferation of activated B-cells and subsequently immunoglobulin production. Plays a pivotal role in regulating the adaptive immune system by controlling the survival and proliferation of regulatory T-cells, which are required for the maintenance of immune tolerance. Moreover, participates in the differentiation and homeostasis of effector T-cell subsets, including Th1, Th2, Th17 as well as memory CD8-positive T-cells. The protein is Interleukin-2 (IL2) of Orcinus orca (Killer whale).